Reading from the N-terminus, the 422-residue chain is Dihydroorotase (422 aa).

2 residues coordinate Zn(2+): His-61 and His-63. Substrate is bound by residues 63 to 65 (HLR) and Asn-95. Asp-153 lines the Zn(2+) pocket. Residue Asn-278 participates in substrate binding. Asp-305 contacts Zn(2+). The active site involves Asp-305. Substrate-binding positions include His-309 and 322-323 (PG).

Belongs to the metallo-dependent hydrolases superfamily. DHOase family. Class I DHOase subfamily. As to quaternary structure, monomer. Forms a 1:1 stoichiometric complex with PyrB. The complex exists as an equilibrium mixture of heterohexamers, composed of 3 PyrC and 3 PyrB subunits, and dodecamers. The complex has both DHOase and ATCase activities. It depends on Zn(2+) as a cofactor.

It carries out the reaction (S)-dihydroorotate + H2O = N-carbamoyl-L-aspartate + H(+). The protein operates within pyrimidine metabolism; UMP biosynthesis via de novo pathway; (S)-dihydroorotate from bicarbonate: step 3/3. Its activity is regulated as follows. The monomer has very low activity by itself. Activated several thousandfold by formation of a complex with PyrB aspartate carbamoyltransferase (ATCase). Functionally, catalyzes the reversible cyclization of carbamoyl aspartate to dihydroorotate. The sequence is that of Dihydroorotase from Aquifex aeolicus (strain VF5).